Reading from the N-terminus, the 279-residue chain is DegV domain-containing protein lmo1863 (279 aa).

The DegV domain occupies 4-278 (IKIITDSTAG…TGAFAFMYYT (275 aa)). Hexadecanoate is bound by residues serine 62 and serine 94.

Its function is as follows. May bind long-chain fatty acids, such as palmitate, and may play a role in lipid transport or fatty acid metabolism. The polypeptide is DegV domain-containing protein lmo1863 (Listeria monocytogenes serovar 1/2a (strain ATCC BAA-679 / EGD-e)).